The sequence spans 266 residues: Protein SCO2 homolog, mitochondrial (266 aa).

The N-terminal 41 residues, 1–41 (MLLLTRSPTAWHRLSQLKPRVLPGTLGGQALHLRSWLLSRQ), are a transit peptide targeting the mitochondrion. Topologically, residues 42–60 (GPAETGGQGQPQGPGLRTR) are mitochondrial matrix. Residues 61–78 (LLITGLFGAGLGGAWLAL) form a helical membrane-spanning segment. Over 79 to 266 (RAEKERLQQQ…HMAAFRSVLS (188 aa)) the chain is Mitochondrial intermembrane. Residues 85 to 259 (LQQQKRTEAL…ISDSVRRHMA (175 aa)) enclose the Thioredoxin domain. Residues cysteine 133, cysteine 137, and histidine 224 each coordinate Cu cation. The cysteines at positions 133 and 137 are disulfide-linked.

It belongs to the SCO1/2 family. As to quaternary structure, homodimer. Interacts with COA6. Found in a complex with TMEM177, COX20, COA6, MT-CO2/COX2, COX18 and SCO1. Interacts with TMEM177 in a COX20-dependent manner. Interacts with COX20 in a MT-CO2/COX2- and COX18-dependent manner. Interacts with COX16. In terms of tissue distribution, ubiquitous.

It is found in the mitochondrion inner membrane. Copper metallochaperone essential for the synthesis and maturation of cytochrome c oxidase subunit II (MT-CO2/COX2) by facilitating the incorporation of copper into the Cu(A) site of MT-CO2/COX2. Could also act as a thiol-disulfide oxidoreductase to regulate the redox state of the cysteines in SCO1 during maturation of MT-CO2/COX2. In Homo sapiens (Human), this protein is Protein SCO2 homolog, mitochondrial (SCO2).